Reading from the N-terminus, the 299-residue chain is GDNF family receptor alpha-4 (299 aa).

The signal sequence occupies residues 1–20 (MVRCLGPALLLLLLLGSASS). The segment at 145–198 (RGLSPAHRPPAAQASPPGLSGLVHPSAQRPRRLPAGPGRPLPARLRGPRGVPAG) is disordered. Residues 177–198 (LPAGPGRPLPARLRGPRGVPAG) show a composition bias toward low complexity. The N-linked (GlcNAc...) asparagine glycan is linked to Asn-208. Gly-278 is lipidated: GPI-anchor amidated glycine. Positions 279 to 299 (RALERRSLLSILPVLALPALL) are cleaved as a propeptide — removed in mature form.

The protein belongs to the GDNFR family. As to quaternary structure, interacts with ARTN ligand and RET: forms a 2:2:2 ternary complex composed of ARTN ligand, GFRA3 and RET receptor. Interacts with SORL1. Predominantly expressed in the adult thyroid gland. Low levels also found in fetal adrenal and thyroid glands.

The protein localises to the cell membrane. Its subcellular location is the secreted. In terms of biological role, receptor for persephin (PSPN), a growth factor that exhibits neurotrophic activity on mesencephalic dopaminergic and motor neurons. Acts by binding to its coreceptor, GFRA4, leading to autophosphorylation and activation of the RET receptor. May be important in C-cell development and, in the postnatal development of the adrenal medulla. The protein is GDNF family receptor alpha-4 (GFRA4) of Homo sapiens (Human).